The chain runs to 189 residues: NADH-ubiquinone oxidoreductase 20.9 kDa subunit (189 aa).

Residues 73–88 (AMRLATAVGFFGGFLY) traverse the membrane as a helical segment.

As to quaternary structure, complex I is composed of about 40 different subunits. The N-terminus is blocked.

It localises to the mitochondrion inner membrane. It catalyses the reaction a ubiquinone + NADH + 5 H(+)(in) = a ubiquinol + NAD(+) + 4 H(+)(out). Functionally, transfer of electrons from NADH to the respiratory chain. The immediate electron acceptor for the enzyme is believed to be ubiquinone. In Neurospora crassa (strain ATCC 24698 / 74-OR23-1A / CBS 708.71 / DSM 1257 / FGSC 987), this protein is NADH-ubiquinone oxidoreductase 20.9 kDa subunit (nuo20.9).